Here is a 359-residue protein sequence, read N- to C-terminus: MAP kinase-activated protein kinase 2 (359 aa).

Residues 20-281 (VTSNTVLGYG…IQDVISNKWI (262 aa)) form the Protein kinase domain. ATP-binding positions include 26-34 (LGYGINGKV) and K49. D142 (proton acceptor) is an active-site residue.

This sequence belongs to the protein kinase superfamily. CAMK Ser/Thr protein kinase family. Phosphorylated and activated by MAP kinase.

The catalysed reaction is L-seryl-[protein] + ATP = O-phospho-L-seryl-[protein] + ADP + H(+). It catalyses the reaction L-threonyl-[protein] + ATP = O-phospho-L-threonyl-[protein] + ADP + H(+). Its physiological substrate seems to be the small heat shock protein (HSP27/HSP25). The sequence is that of MAP kinase-activated protein kinase 2 (MAPk-Ak2) from Drosophila melanogaster (Fruit fly).